Reading from the N-terminus, the 397-residue chain is Elongation factor Tu (397 aa).

In terms of domain architecture, tr-type G spans 10 to 207 (KPHVNVGTIG…ACDSYIPDPQ (198 aa)). A G1 region spans residues 19–26 (GHIDHGKT). 19–26 (GHIDHGKT) provides a ligand contact to GTP. Residue T26 coordinates Mg(2+). Residues 60–64 (GITIA) form a G2 region. Positions 81–84 (DCPG) are G3. GTP-binding positions include 81–85 (DCPGH) and 136–139 (NKCD). The tract at residues 136-139 (NKCD) is G4. The G5 stretch occupies residues 174–176 (SAL).

It belongs to the TRAFAC class translation factor GTPase superfamily. Classic translation factor GTPase family. EF-Tu/EF-1A subfamily. As to quaternary structure, monomer.

It is found in the cytoplasm. It carries out the reaction GTP + H2O = GDP + phosphate + H(+). Its function is as follows. GTP hydrolase that promotes the GTP-dependent binding of aminoacyl-tRNA to the A-site of ribosomes during protein biosynthesis. The sequence is that of Elongation factor Tu from Lawsonia intracellularis (strain PHE/MN1-00).